A 953-amino-acid polypeptide reads, in one-letter code: E3 ubiquitin-protein ligase ZNF598 (953 aa).

Residues 25–39 (KPSKSTRIKPTKPHH) are compositionally biased toward basic residues. The disordered stretch occupies residues 25–47 (KPSKSTRIKPTKPHHTPSNSMES). The RING-type zinc finger occupies 57 to 97 (CVLCCQDIDLFAVGKCDHPVCYRCSTKMRVLCEQKYCAVCR). The segment at 215–238 (PLCKFCDDRYLDNDELLKHLRRDH) adopts a C2H2-type zinc-finger fold. 2 disordered regions span residues 299-779 (SKNR…EDSS) and 884-911 (EKQQ…SSLD). Over residues 371-380 (AAAMRASMAS) the composition is skewed to low complexity. Residues 381-409 (HQEERSHAQERSMLKPRREEKLEPDETRN) are compositionally biased toward basic and acidic residues. Polar residues-rich tracts occupy residues 410–431 (NRST…NGSL) and 467–483 (LSGS…YTNQ). A Phosphoserine modification is found at Ser489. 2 stretches are compositionally biased toward low complexity: residues 508–518 (QSSAASAWSQA) and 536–553 (MTPM…PLPS). Composition is skewed to polar residues over residues 555–564 (SVPQPLTASS) and 641–650 (LGSPSHTPET). Basic and acidic residues predominate over residues 655–666 (AHKENVPEKKPP). The span at 695-711 (SCTSFPENITSSKQPVT) shows a compositional bias: polar residues. A compositionally biased stretch (pro residues) spans 747–765 (LPPPPPPGLGPAVSKPPPG). Over residues 770-779 (PLNSNVEDSS) the composition is skewed to polar residues.

It belongs to the ZNF598/HEL2 family.

The protein localises to the cytoplasm. Its subcellular location is the cytosol. The enzyme catalyses S-ubiquitinyl-[E2 ubiquitin-conjugating enzyme]-L-cysteine + [acceptor protein]-L-lysine = [E2 ubiquitin-conjugating enzyme]-L-cysteine + N(6)-ubiquitinyl-[acceptor protein]-L-lysine.. It functions in the pathway protein modification; protein ubiquitination. In terms of biological role, E3 ubiquitin-protein ligase that plays a key role in the ribosome quality control (RQC), a pathway that takes place when a ribosome has stalled during translation, leading to degradation of nascent peptide chains. ZNF598 is activated when ribosomes are stalled within an mRNA following translation of prematurely polyadenylated mRNAs. Acts as a ribosome collision sensor: specifically recognizes and binds collided di-ribosome, which arises when a trailing ribosome encounters a slower leading ribosome, leading to terminally arrest translation. Following binding to colliding ribosomes, mediates monoubiquitination of 40S ribosomal proteins RPS10/eS10 and RPS3/uS3, and 'Lys-63'-linked polyubiquitination of RPS20/uS10. Polyubiquitination of RPS20/uS10 promotes recruitment of the RQT (ribosome quality control trigger) complex, which drives the disassembly of stalled ribosomes, followed by degradation of nascent peptides. The polypeptide is E3 ubiquitin-protein ligase ZNF598 (Danio rerio (Zebrafish)).